Consider the following 94-residue polypeptide: Putative membrane protein insertion efficiency factor (94 aa).

The protein belongs to the UPF0161 family.

It localises to the cell inner membrane. Could be involved in insertion of integral membrane proteins into the membrane. This chain is Putative membrane protein insertion efficiency factor, found in Albidiferax ferrireducens (strain ATCC BAA-621 / DSM 15236 / T118) (Rhodoferax ferrireducens).